A 378-amino-acid polypeptide reads, in one-letter code: Putative glutamate--cysteine ligase 2 (378 aa).

Belongs to the glutamate--cysteine ligase type 2 family. YbdK subfamily.

The catalysed reaction is L-cysteine + L-glutamate + ATP = gamma-L-glutamyl-L-cysteine + ADP + phosphate + H(+). ATP-dependent carboxylate-amine ligase which exhibits weak glutamate--cysteine ligase activity. The sequence is that of Putative glutamate--cysteine ligase 2 from Salinispora arenicola (strain CNS-205).